Reading from the N-terminus, the 325-residue chain is RNA ligase 1 (325 aa).

Mg(2+) serves as cofactor. Requires Mn(2+) as cofactor. AMPylates itself (auto-AMPylation).

It catalyses the reaction ATP + (ribonucleotide)n-3'-hydroxyl + 5'-phospho-(ribonucleotide)m = (ribonucleotide)n+m + AMP + diphosphate.. Its function is as follows. Functions as an RNA ligase, in vitro. The ligation reaction entails three nucleotidyl transfer steps. In the first step, the RNA ligase reacts with ATP in the absence of nucleic acid to form a covalent ligase-AMP intermediate and release pyrophosphate. In step 2, the ligase-AMP binds to the nucleic acid and transfers the adenylate to the 5'-PO4 terminus to form an adenylylated intermediate. In step 3, the RNA ligase directs the attack of the 3'-OH on the 5'-phosphoanhydride linkage, resulting in a repaired 3'-5' phosphodiester and release of AMP. Exhibits selectivity for single-stranded RNA substrates and may not have nick-sealing activity on double-stranded DNA-RNA hybrids. May play a role in maintaining RNA integrity under stress conditions, for example in response to reactive oxygen species (ROS). The protein is RNA ligase 1 of Pongo abelii (Sumatran orangutan).